A 677-amino-acid chain; its full sequence is UvrABC system protein B (677 aa).

A Helicase ATP-binding domain is found at 27–414; the sequence is ANLGHGVRDQ…SQGVIAEQII (388 aa). 40-47 is a binding site for ATP; sequence GVTGSGKT. Residues 93–116 carry the Beta-hairpin motif; that stretch reads YYDYYQPEAYVPASDTYIEKDSSI. In terms of domain architecture, Helicase C-terminal spans 432-594; the sequence is QVDDLLAECR…IEPRTIRKSL (163 aa). The UVR domain occupies 638-673; that stretch reads AKHIQKLEREMREAAKELEFERAATLRDRIRLLRER.

This sequence belongs to the UvrB family. Forms a heterotetramer with UvrA during the search for lesions. Interacts with UvrC in an incision complex.

It is found in the cytoplasm. Its function is as follows. The UvrABC repair system catalyzes the recognition and processing of DNA lesions. A damage recognition complex composed of 2 UvrA and 2 UvrB subunits scans DNA for abnormalities. Upon binding of the UvrA(2)B(2) complex to a putative damaged site, the DNA wraps around one UvrB monomer. DNA wrap is dependent on ATP binding by UvrB and probably causes local melting of the DNA helix, facilitating insertion of UvrB beta-hairpin between the DNA strands. Then UvrB probes one DNA strand for the presence of a lesion. If a lesion is found the UvrA subunits dissociate and the UvrB-DNA preincision complex is formed. This complex is subsequently bound by UvrC and the second UvrB is released. If no lesion is found, the DNA wraps around the other UvrB subunit that will check the other stand for damage. This is UvrABC system protein B from Nitratidesulfovibrio vulgaris (strain ATCC 29579 / DSM 644 / CCUG 34227 / NCIMB 8303 / VKM B-1760 / Hildenborough) (Desulfovibrio vulgaris).